The chain runs to 319 residues: uncharacterized protein (319 aa).

The disordered stretch occupies residues 281–319; it reads KVERKQRRRDDQNIMRSKLPQQRQNPFCSTERPKRARCD. Residues 299–308 show a composition bias toward polar residues; that stretch reads LPQQRQNPFC.

The protein localises to the cytoplasm. It localises to the nucleus. This is an uncharacterized protein from Saccharomyces cerevisiae (strain ATCC 204508 / S288c) (Baker's yeast).